Here is a 501-residue protein sequence, read N- to C-terminus: ATP synthase subunit alpha, chloroplastic (501 aa).

Residue 170–177 (GDRQTGKT) participates in ATP binding.

Belongs to the ATPase alpha/beta chains family. F-type ATPases have 2 components, CF(1) - the catalytic core - and CF(0) - the membrane proton channel. CF(1) has five subunits: alpha(3), beta(3), gamma(1), delta(1), epsilon(1). CF(0) has four main subunits: a, b, b' and c.

The protein localises to the plastid. Its subcellular location is the chloroplast thylakoid membrane. The catalysed reaction is ATP + H2O + 4 H(+)(in) = ADP + phosphate + 5 H(+)(out). In terms of biological role, produces ATP from ADP in the presence of a proton gradient across the membrane. The alpha chain is a regulatory subunit. This Nephroselmis olivacea (Green alga) protein is ATP synthase subunit alpha, chloroplastic.